We begin with the raw amino-acid sequence, 275 residues long: Anthracycline biosynthesis protein DauV (275 aa).

2 consecutive VOC domains span residues 8 to 136 and 150 to 263; these read APAW…VWRK and SVGW…VVEL.

It functions in the pathway antibiotic biosynthesis; daunorubicin biosynthesis. It participates in antibiotic biosynthesis; carminomycin biosynthesis. Functionally, involved in the biosynthesis of the anthracyclines carminomycin and daunorubicin (daunomycin) which are aromatic polyketide antibiotics that exhibit high cytotoxicity and are widely applied in the chemotherapy of a variety of cancers. Acts jointly with DoxA in the conversion of 13-deoxycarminomycin and 13-deoxydaunorubicin to yield carminomycin and daunorubicin, respectively. The sequence is that of Anthracycline biosynthesis protein DauV (dauV) from Streptomyces sp. (strain C5).